Reading from the N-terminus, the 159-residue chain is 3-hydroxyacyl-[acyl-carrier-protein] dehydratase FabZ (159 aa).

His-58 is an active-site residue.

The protein belongs to the thioester dehydratase family. FabZ subfamily.

The protein resides in the cytoplasm. It carries out the reaction a (3R)-hydroxyacyl-[ACP] = a (2E)-enoyl-[ACP] + H2O. In terms of biological role, involved in unsaturated fatty acids biosynthesis. Catalyzes the dehydration of short chain beta-hydroxyacyl-ACPs and long chain saturated and unsaturated beta-hydroxyacyl-ACPs. This is 3-hydroxyacyl-[acyl-carrier-protein] dehydratase FabZ from Helicobacter pylori (strain ATCC 700392 / 26695) (Campylobacter pylori).